The primary structure comprises 327 residues: Aspartate carbamoyltransferase catalytic subunit (327 aa).

Carbamoyl phosphate is bound by residues Arg54 and Thr55. Lys82 provides a ligand contact to L-aspartate. The carbamoyl phosphate site is built by Arg104, His134, and Gln137. L-aspartate is bound by residues Arg177 and Arg232. 2 residues coordinate carbamoyl phosphate: Gly280 and Pro281.

The protein belongs to the aspartate/ornithine carbamoyltransferase superfamily. ATCase family. In terms of assembly, heterododecamer (2C3:3R2) of six catalytic PyrB chains organized as two trimers (C3), and six regulatory PyrI chains organized as three dimers (R2).

The catalysed reaction is carbamoyl phosphate + L-aspartate = N-carbamoyl-L-aspartate + phosphate + H(+). The protein operates within pyrimidine metabolism; UMP biosynthesis via de novo pathway; (S)-dihydroorotate from bicarbonate: step 2/3. In terms of biological role, catalyzes the condensation of carbamoyl phosphate and aspartate to form carbamoyl aspartate and inorganic phosphate, the committed step in the de novo pyrimidine nucleotide biosynthesis pathway. This chain is Aspartate carbamoyltransferase catalytic subunit, found in Micrococcus luteus (strain ATCC 4698 / DSM 20030 / JCM 1464 / CCM 169 / CCUG 5858 / IAM 1056 / NBRC 3333 / NCIMB 9278 / NCTC 2665 / VKM Ac-2230) (Micrococcus lysodeikticus).